Reading from the N-terminus, the 278-residue chain is Small ribosomal subunit protein uS2 (278 aa).

Residues 233–257 (IDMEAAGEAPANKGKKKSVKARLDK) are disordered.

It belongs to the universal ribosomal protein uS2 family.

The protein is Small ribosomal subunit protein uS2 of Bacteroides thetaiotaomicron (strain ATCC 29148 / DSM 2079 / JCM 5827 / CCUG 10774 / NCTC 10582 / VPI-5482 / E50).